The sequence spans 254 residues: Dihydroorotate dehydrogenase B (NAD(+)), electron transfer subunit (254 aa).

The FAD-binding FR-type domain maps to 1–99 (MLQTEMKVIQ…LGPLGKGFDI (99 aa)). FAD-binding positions include 50–53 (RPIS), 67–69 (LYR), and 74–75 (GT). The [2Fe-2S] cluster site is built by Cys218, Cys223, Cys226, and Cys241.

Belongs to the PyrK family. As to quaternary structure, heterotetramer of 2 PyrK and 2 PyrD type B subunits. The cofactor is [2Fe-2S] cluster. Requires FAD as cofactor.

The protein operates within pyrimidine metabolism; UMP biosynthesis via de novo pathway; orotate from (S)-dihydroorotate (NAD(+) route): step 1/1. In terms of biological role, responsible for channeling the electrons from the oxidation of dihydroorotate from the FMN redox center in the PyrD type B subunit to the ultimate electron acceptor NAD(+). The chain is Dihydroorotate dehydrogenase B (NAD(+)), electron transfer subunit from Listeria monocytogenes serotype 4b (strain F2365).